We begin with the raw amino-acid sequence, 324 residues long: tRNA U34 carboxymethyltransferase (324 aa).

Carboxy-S-adenosyl-L-methionine-binding positions include lysine 91, tryptophan 105, lysine 110, glycine 130, 152 to 154 (DPS), 181 to 182 (IE), methionine 196, tyrosine 200, and arginine 315.

Belongs to the class I-like SAM-binding methyltransferase superfamily. CmoB family. Homotetramer.

The catalysed reaction is carboxy-S-adenosyl-L-methionine + 5-hydroxyuridine(34) in tRNA = 5-carboxymethoxyuridine(34) in tRNA + S-adenosyl-L-homocysteine + H(+). Its function is as follows. Catalyzes carboxymethyl transfer from carboxy-S-adenosyl-L-methionine (Cx-SAM) to 5-hydroxyuridine (ho5U) to form 5-carboxymethoxyuridine (cmo5U) at position 34 in tRNAs. This chain is tRNA U34 carboxymethyltransferase, found in Aliivibrio fischeri (strain MJ11) (Vibrio fischeri).